Here is a 302-residue protein sequence, read N- to C-terminus: MDDLHGSNARMHIREAQDPMHVQFEHHALHHIHNGSGMVDDQADDGNAGGMSEGVETDIPSHPGNVTDNRGEVVDRGSEQGDQLTLSFQGQVYVFDSVLPEKVQAVLLLLGGRELPQAAPPGLGSPHQNNRVSSLPGTPQRFSIPQRLASLVRFREKRKGRNFDKKIRYTVRKEVALRMQRNKGQFTSAKSNNDEAASAGSSWGSNQTWAIESSEAQHQEISCRHCGIGEKSTPMMRRGPAGPRTLCNACGLMWANKGAFRDLSKASPQTAQNLPLNKNEDANLETDHQIMITVANDISNSQ.

The tract at residues 47 to 66 is disordered; that stretch reads NAGGMSEGVETDIPSHPGNV. Positions 77–112 constitute a Tify domain; that stretch reads GSEQGDQLTLSFQGQVYVFDSVLPEKVQAVLLLLGG. A disordered region spans residues 119-141; it reads APPGLGSPHQNNRVSSLPGTPQR. Polar residues predominate over residues 126–141; sequence PHQNNRVSSLPGTPQR. One can recognise a CCT domain in the interval 147–189; it reads RLASLVRFREKRKGRNFDKKIRYTVRKEVALRMQRNKGQFTSA. The GATA-type zinc-finger motif lies at 217-273; that stretch reads QHQEISCRHCGIGEKSTPMMRRGPAGPRTLCNACGLMWANKGAFRDLSKASPQTAQN.

This sequence belongs to the type IV zinc-finger family. Class C subfamily. As to expression, predominantly expressed in shoot apices, inflorescences and roots.

Its subcellular location is the nucleus. Functionally, transcriptional activator that specifically binds 5'-GATA-3' or 5'-GAT-3' motifs within gene promoters. In Arabidopsis thaliana (Mouse-ear cress), this protein is GATA transcription factor 28 (GATA28).